Here is a 229-residue protein sequence, read N- to C-terminus: Putative N-acetylmannosamine-6-phosphate 2-epimerase (229 aa).

Belongs to the NanE family.

The catalysed reaction is an N-acyl-D-glucosamine 6-phosphate = an N-acyl-D-mannosamine 6-phosphate. It functions in the pathway amino-sugar metabolism; N-acetylneuraminate degradation; D-fructose 6-phosphate from N-acetylneuraminate: step 3/5. Converts N-acetylmannosamine-6-phosphate (ManNAc-6-P) to N-acetylglucosamine-6-phosphate (GlcNAc-6-P). This is Putative N-acetylmannosamine-6-phosphate 2-epimerase from Salmonella agona (strain SL483).